The primary structure comprises 241 residues: tRNA pseudouridine synthase A (241 aa).

Catalysis depends on D51, which acts as the Nucleophile. Y110 lines the substrate pocket.

It belongs to the tRNA pseudouridine synthase TruA family. As to quaternary structure, homodimer.

It catalyses the reaction uridine(38/39/40) in tRNA = pseudouridine(38/39/40) in tRNA. In terms of biological role, formation of pseudouridine at positions 38, 39 and 40 in the anticodon stem and loop of transfer RNAs. The protein is tRNA pseudouridine synthase A of Campylobacter jejuni subsp. doylei (strain ATCC BAA-1458 / RM4099 / 269.97).